Here is a 212-residue protein sequence, read N- to C-terminus: Cytidylate kinase (212 aa).

ATP is bound at residue 7 to 15 (GPAASGKGT).

It belongs to the cytidylate kinase family. Type 1 subfamily.

It localises to the cytoplasm. It catalyses the reaction CMP + ATP = CDP + ADP. The catalysed reaction is dCMP + ATP = dCDP + ADP. The protein is Cytidylate kinase of Rhodopseudomonas palustris (strain HaA2).